We begin with the raw amino-acid sequence, 294 residues long: tRNA pseudouridine synthase A (294 aa).

Catalysis depends on D64, which acts as the Nucleophile. Position 122 (Y122) interacts with substrate.

It belongs to the tRNA pseudouridine synthase TruA family. Homodimer.

It catalyses the reaction uridine(38/39/40) in tRNA = pseudouridine(38/39/40) in tRNA. Its function is as follows. Formation of pseudouridine at positions 38, 39 and 40 in the anticodon stem and loop of transfer RNAs. The protein is tRNA pseudouridine synthase A of Synechococcus sp. (strain ATCC 27144 / PCC 6301 / SAUG 1402/1) (Anacystis nidulans).